A 284-amino-acid chain; its full sequence is 2-dehydro-3-deoxyphosphooctonate aldolase (284 aa).

Belongs to the KdsA family.

The protein localises to the cytoplasm. It catalyses the reaction D-arabinose 5-phosphate + phosphoenolpyruvate + H2O = 3-deoxy-alpha-D-manno-2-octulosonate-8-phosphate + phosphate. Its pathway is carbohydrate biosynthesis; 3-deoxy-D-manno-octulosonate biosynthesis; 3-deoxy-D-manno-octulosonate from D-ribulose 5-phosphate: step 2/3. It functions in the pathway bacterial outer membrane biogenesis; lipopolysaccharide biosynthesis. This chain is 2-dehydro-3-deoxyphosphooctonate aldolase, found in Paraburkholderia phymatum (strain DSM 17167 / CIP 108236 / LMG 21445 / STM815) (Burkholderia phymatum).